The chain runs to 309 residues: UDP-N-acetylenolpyruvoylglucosamine reductase (309 aa).

The 188-residue stretch at 34–221 (RVGGPAQVLF…TAAREAAQPI (188 aa)) folds into the FAD-binding PCMH-type domain. Arg-179 is a catalytic residue. The active-site Proton donor is the Ser-228. Residue Glu-298 is part of the active site.

Belongs to the MurB family. It depends on FAD as a cofactor.

It localises to the cytoplasm. It catalyses the reaction UDP-N-acetyl-alpha-D-muramate + NADP(+) = UDP-N-acetyl-3-O-(1-carboxyvinyl)-alpha-D-glucosamine + NADPH + H(+). Its pathway is cell wall biogenesis; peptidoglycan biosynthesis. In terms of biological role, cell wall formation. This chain is UDP-N-acetylenolpyruvoylglucosamine reductase, found in Methylorubrum populi (strain ATCC BAA-705 / NCIMB 13946 / BJ001) (Methylobacterium populi).